A 141-amino-acid polypeptide reads, in one-letter code: Translation initiation factor 2 subunit beta (141 aa).

This sequence belongs to the eIF-2-beta/eIF-5 family. As to quaternary structure, heterotrimer composed of an alpha, a beta and a gamma chain.

Its function is as follows. eIF-2 functions in the early steps of protein synthesis by forming a ternary complex with GTP and initiator tRNA. The sequence is that of Translation initiation factor 2 subunit beta from Sulfolobus acidocaldarius (strain ATCC 33909 / DSM 639 / JCM 8929 / NBRC 15157 / NCIMB 11770).